The following is a 360-amino-acid chain: GTPase Obg (360 aa).

One can recognise an Obg domain in the interval 1–156 (MFVDSVEIII…KCVRLELKLI (156 aa)). One can recognise an OBG-type G domain in the interval 157-360 (ADIGLVGFPN…LKFVLLKALQ (204 aa)). Residues 163-170 (GFPNAGKS), 188-192 (FTTLV), 210-213 (DIPG), 279-282 (NKCD), and 341-343 (SAV) contribute to the GTP site. Mg(2+) is bound by residues Ser-170 and Thr-190.

Belongs to the TRAFAC class OBG-HflX-like GTPase superfamily. OBG GTPase family. In terms of assembly, monomer. It depends on Mg(2+) as a cofactor.

The protein localises to the cytoplasm. An essential GTPase which binds GTP, GDP and possibly (p)ppGpp with moderate affinity, with high nucleotide exchange rates and a fairly low GTP hydrolysis rate. Plays a role in control of the cell cycle, stress response, ribosome biogenesis and in those bacteria that undergo differentiation, in morphogenesis control. This is GTPase Obg from Helicobacter pylori (strain P12).